The following is a 41-amino-acid chain: Large ribosomal subunit protein bL36 (41 aa).

This sequence belongs to the bacterial ribosomal protein bL36 family.

In Gluconobacter oxydans (strain 621H) (Gluconobacter suboxydans), this protein is Large ribosomal subunit protein bL36.